The following is a 108-amino-acid chain: Tetrahydromethanopterin S-methyltransferase subunit B (108 aa).

A helical membrane pass occupies residues 79–99 (GMFFGFWVTMAILVLVTILAV).

It belongs to the MtrB family. In terms of assembly, the complex is composed of 8 subunits; MtrA, MtrB, MtrC, MtrD, MtrE, MtrF, MtrG and MtrH.

It localises to the cell membrane. The enzyme catalyses 5-methyl-5,6,7,8-tetrahydromethanopterin + coenzyme M + 2 Na(+)(in) = 5,6,7,8-tetrahydromethanopterin + methyl-coenzyme M + 2 Na(+)(out). Its pathway is one-carbon metabolism; methanogenesis from CO(2); methyl-coenzyme M from 5,10-methylene-5,6,7,8-tetrahydromethanopterin: step 2/2. Its function is as follows. Part of a complex that catalyzes the formation of methyl-coenzyme M and tetrahydromethanopterin from coenzyme M and methyl-tetrahydromethanopterin. This is an energy-conserving, sodium-ion translocating step. The sequence is that of Tetrahydromethanopterin S-methyltransferase subunit B from Methanococcus maripaludis (strain C7 / ATCC BAA-1331).